A 337-amino-acid polypeptide reads, in one-letter code: UDP-3-O-acylglucosamine N-acyltransferase (337 aa).

H238 serves as the catalytic Proton acceptor.

This sequence belongs to the transferase hexapeptide repeat family. LpxD subfamily. Homotrimer.

It carries out the reaction a UDP-3-O-[(3R)-3-hydroxyacyl]-alpha-D-glucosamine + a (3R)-hydroxyacyl-[ACP] = a UDP-2-N,3-O-bis[(3R)-3-hydroxyacyl]-alpha-D-glucosamine + holo-[ACP] + H(+). Its pathway is bacterial outer membrane biogenesis; LPS lipid A biosynthesis. In terms of biological role, catalyzes the N-acylation of UDP-3-O-acylglucosamine using 3-hydroxyacyl-ACP as the acyl donor. Is involved in the biosynthesis of lipid A, a phosphorylated glycolipid that anchors the lipopolysaccharide to the outer membrane of the cell. This chain is UDP-3-O-acylglucosamine N-acyltransferase, found in Xanthomonas oryzae pv. oryzae (strain KACC10331 / KXO85).